The chain runs to 117 residues: Large ribosomal subunit protein bL20c (117 aa).

This sequence belongs to the bacterial ribosomal protein bL20 family.

Its subcellular location is the plastid. It is found in the chloroplast. Functionally, binds directly to 23S ribosomal RNA and is necessary for the in vitro assembly process of the 50S ribosomal subunit. It is not involved in the protein synthesizing functions of that subunit. The protein is Large ribosomal subunit protein bL20c of Phalaenopsis aphrodite subsp. formosana (Moth orchid).